The primary structure comprises 1024 residues: Gamma-tubulin complex component 5 (1024 aa).

Disordered stretches follow at residues 155-203 (IGPY…LDPC) and 521-545 (TENE…SSRQ). Residues 189 to 203 (TPLEEQDQNRKLDPC) show a composition bias toward basic and acidic residues. A compositionally biased stretch (low complexity) spans 531-543 (ASASSGSDQGPSS).

Belongs to the TUBGCP family. As to quaternary structure, component of the gamma-tubulin ring complex (gTuRC) consisting of TUBGCP2, TUBGCP3, TUBGCP4, TUBGCP5 and TUBGCP6 and gamma-tubulin TUBG1 or TUBG2. TUBGCP2, TUBGCP3, TUBGCP4, TUBGCP5 and TUBGCP6 assemble in a 5:5:2:1:1 stoichiometry; each is associated with a gamma-tubulin, thereby arranging 14 gamma-tubulins in a helical manner. Gamma-tubulin at the first position is blocked by TUBGCP3 at the last position, allowing 13 protafilaments to grow into a microtubule. The gTuRC (via TUBGCP3 and TUBGCP6) interacts with ACTB and MZT1; the interactions form a luminal bridge that stabilizes the initial structure during complex assembly. The gTuRC (via TUBGCP2) interacts with MZT2A/MZT2B and CDK5RAP2 (via CM1 motif); the interactions play a role in gTuRC activation. Widely expressed, with highest levels in heart and skeletal muscle and moderate levels in brain.

It localises to the cytoplasm. It is found in the cytoskeleton. The protein resides in the microtubule organizing center. Its subcellular location is the centrosome. Its function is as follows. Component of the gamma-tubulin ring complex (gTuRC) which mediates microtubule nucleation. The gTuRC regulates the minus-end nucleation of alpha-beta tubulin heterodimers that grow into microtubule protafilaments, a critical step in centrosome duplication and spindle formation. This Homo sapiens (Human) protein is Gamma-tubulin complex component 5 (TUBGCP5).